A 675-amino-acid chain; its full sequence is Protein PALS1 (675 aa).

The interval 1–78 is disordered; sequence MTTSHMNGHV…RREEEGKKQE (78 aa). The interval 1 to 345 is required for the correct localization of PALS1 and PATJ at cell-cell contacts and the normal formation of tight junctions and adherens junctions; it reads MTTSHMNGHV…QQIKPPPAKE (345 aa). Composition is skewed to basic and acidic residues over residues 10–36 and 54–78; these read VTEE…REMA and AQLE…KKQE. Residues Ser14 and Ser25 each carry the phosphoserine modification. The segment at 21-140 is interaction with PARD6B; that stretch reads VDLASPEEHQ…LKHIQHTLVD (120 aa). Ser83 and Ser84 each carry phosphoserine. L27 domains are found at residues 120-177 and 179-235; these read KILE…NKAS and PFPL…MQLE. An interaction with LIN7C region spans residues 181–243; it reads PLISNAQDLA…LEPFTDERVY (63 aa). The PDZ domain occupies 256–336; the sequence is IVRIEKARDI…TLTFVLIPSQ (81 aa). An SH3 domain is found at 345 to 417; it reads ETVIHVKAHF…PGKSFQQQRE (73 aa). The Guanylate kinase-like domain maps to 479 to 660; sequence KRPIILIGPQ…AYQELLRLIN (182 aa). Residue 486–493 coordinates ATP; the sequence is GPQNCGQN.

This sequence belongs to the MAGUK family. Heterodimer with MPP1. Forms a heterotrimeric complex composed of PALS1, LIN7B and PATJ; the N-terminal L27 domain of PALS1 interacts with the L27 domain of PATJ and the C-terminal L27 domain of PALS1 interacts with the L27 domain of LIN7B. Component of a complex composed of PALS1, CRB1 and MPP4. Component of a complex whose core is composed of ARHGAP17, AMOT, PALS1, PATJ and PARD3/PAR3. Component of a complex composed of PALS1, CRB1 and EPB41L5. Within the complex, interacts (via HOOK domain) with EPB41L5 (via FERM domain), and interacts with CRB1 (via intracellular domain). Component of a complex composed of PALS1, MPP3 and CRB1; PALS1 acts as a bridging protein between MPP3 (via guanylate kinase-like domain) and CRB1. Component of a complex composed of CRB3, PALS1 and PATJ. As part of the Crumbs complex; interacts with WWP1, the interaction is enhanced by AMOTL2 and facilitates WWP1 localization to the plasma membrane. The Crumbs complex promotes monoubiquitination of AMOTL2 by WWP1, which activates the Hippo signaling pathway. Interacts (via PDZ domain) with PATJ (via N-terminus). Interacts with EZR. Interacts (via PDZ domain) with CRB1 (via C-terminal ERLI motif). While the PDZ domain is sufficient for interaction with CRB1, the adjacent SH3 and guanylate kinase-like domains are likely to contribute to a high affinity interaction. Interacts with WWTR1/TAZ (via WW domain). Interacts with MPP7. Interacts (via PDZ domain) with CRB3 (via C-terminus). Interacts with LIN7C. Interacts with MPDZ. Interacts with PARD6B. Interacts with SC6A1. Interacts with CDH5; the interaction promotes PALS1 localization to cell junctions and is required for CDH5-mediated vascular lumen formation and endothelial cell. Interacts with NPHP1 (via coiled coil and SH3 domains). Interacts with NPHP4. Interacts with CRB2.

The protein resides in the golgi apparatus. It localises to the cell membrane. Its subcellular location is the endomembrane system. It is found in the cell junction. The protein localises to the tight junction. The protein resides in the adherens junction. It localises to the cell projection. Its subcellular location is the axon. It is found in the perikaryon. The protein localises to the apical cell membrane. Functionally, plays a role in tight junction biogenesis and in the establishment of cell polarity in epithelial cells. Also involved in adherens junction biogenesis by ensuring correct localization of the exocyst complex protein EXOC4/SEC8 which allows trafficking of adherens junction structural component CDH1 to the cell surface. Plays a role through its interaction with CDH5 in vascular lumen formation and endothelial membrane polarity. Required during embryonic and postnatal retinal development. Required for the maintenance of cerebellar progenitor cells in an undifferentiated proliferative state, preventing premature differentiation, and is required for cerebellar histogenesis, fissure formation, cerebellar layer organization and cortical development. Plays a role in neuronal progenitor cell survival, potentially via promotion of mTOR signaling. Plays a role in the radial and longitudinal extension of the myelin sheath in Schwann cells. May modulate SC6A1/GAT1-mediated GABA uptake by stabilizing the transporter. May play a role in the T-cell receptor-mediated activation of NF-kappa-B. Required for localization of EZR to the apical membrane of parietal cells and may play a role in the dynamic remodeling of the apical cytoskeleton. Required for the normal polarized localization of the vesicular marker STX4. Required for the correct trafficking of the myelin proteins PMP22 and MAG. Involved in promoting phosphorylation and cytoplasmic retention of transcriptional coactivators YAP1 and WWTR1/TAZ which leads to suppression of TGFB1-dependent transcription of target genes such as CCN2/CTGF, SERPINE1/PAI1, SNAI1/SNAIL1 and SMAD7. The chain is Protein PALS1 from Canis lupus familiaris (Dog).